Reading from the N-terminus, the 183-residue chain is UPF0340 protein LCA_1354 (183 aa).

The protein belongs to the UPF0340 family.

In Latilactobacillus sakei subsp. sakei (strain 23K) (Lactobacillus sakei subsp. sakei), this protein is UPF0340 protein LCA_1354.